The primary structure comprises 120 residues: Internal scaffolding protein B (120 aa).

The segment covering 1-23 has biased composition (polar residues); it reads MEQLTKNQAVATSQEAVQNQNEP. A disordered region spans residues 1 to 64; it reads MEQLTKNQAV…PDIEAERKKR (64 aa). Basic and acidic residues-rich tracts occupy residues 24-36 and 48-64; these read QLRD…DKSV and LRRD…RKKR.

This sequence belongs to the microviridae B protein family. In terms of assembly, component of the procapsid complex composed of 60 copies of the internally located B, 240 copies of the external scaffolding protein D, 60 copies of each of the viral structural proteins F and G proteins, and 12 copies of H. Post-translationally, the proteolytic cleavage of the internal scaffolding protein B releases the scaffold protein in order to continue virion assembly.

It localises to the host cytoplasm. In terms of biological role, participates in the assembly of the viral procapsid in the cytoplasm. Forms first a 12S pre-assembly complex with protein H, and F and G pentamers, then twelve 12S complexes are joined by the D protein to form the procapsid. Internal scaffold protein B is released from the procapsid upon genome packaging. Autoproteolytic activity cleaves protein B and probably facilitates its removal through the pores of the procapsid. In Enterobacteria phage phiX174 (Isolate Sanger), this protein is Internal scaffolding protein B (B).